We begin with the raw amino-acid sequence, 79 residues long: RNA-binding protein Hfq (79 aa).

One can recognise a Sm domain in the interval 10–69; sequence DPFLNALRKEHVPVSIYLVNGIKLQGNIESFDQYVVLLRNTVTQMVYKHAISTVVPARAV.

It belongs to the Hfq family. As to quaternary structure, homohexamer.

Functionally, RNA chaperone that binds small regulatory RNA (sRNAs) and mRNAs to facilitate mRNA translational regulation in response to envelope stress, environmental stress and changes in metabolite concentrations. Also binds with high specificity to tRNAs. The protein is RNA-binding protein Hfq of Cupriavidus metallidurans (strain ATCC 43123 / DSM 2839 / NBRC 102507 / CH34) (Ralstonia metallidurans).